We begin with the raw amino-acid sequence, 65 residues long: Conotoxin TsMRCL-05 (65 aa).

The signal sequence occupies residues 1 to 22; it reads MHCLPVLVILLLLIASTPSVDA. Positions 23 to 52 are excised as a propeptide; that stretch reads RPNPKDDVPLASFHGAVNAKRYLRTLWNSR. Isoleucine amide is present on Ile64.

The protein belongs to the conotoxin T superfamily. Post-translationally, contains 2 disulfide bonds that can be either 'C1-C3, C2-C4' or 'C1-C4, C2-C3', since these disulfide connectivities have been observed for conotoxins with cysteine framework V (for examples, see AC P0DQQ7 and AC P81755). In terms of tissue distribution, expressed by the venom duct.

It is found in the secreted. In Conus tessulatus (Tessellate cone), this protein is Conotoxin TsMRCL-05.